A 418-amino-acid polypeptide reads, in one-letter code: uncharacterized protein (418 aa).

This is an uncharacterized protein from Escherichia coli (strain K12).